The chain runs to 624 residues: MSAIPQEILHEAVTAKKASIQPFAASEKVYLQGSRPDLRVPMRKISQSDTPTNTGREKNPPVYVYDTSGPYTDPTVSVDLRLGLPPLREPWIEERGDTELLKGPSSSYGLQRQRDPALASLRFEHIRAPRRAKGGANVTQMHYARQGIITPEMEFVAIRENQKLEALAETYKFQHPGEAFGAAIPQVITPEFVRDEVARGRAIIPSNINHPESEPMIIGRNFLVKINCNLGNSAVSSSIEEEVEKMLWAIRWGGDTVMDLSTGKNIHETREWIIRNSPVPIGTVPIYQALEKVDGKAEELTWEIFRDTLIEQAEQGVDYFTIHAGIRLPFIPLTAKRTTGIVSRGGSIMAKWCLAHHKESFLYTHFEDICEIMKAYDVAFSLGDGLRPGSIADANDEAQFAELRTLGELTRIAWKHDVQVMIEGPGHVPMHMIKANMEEQLKHCHEAPFYTLGPLTTDIAPGYDHITSAIGAAMIGWYGTAMLCYVTPKEHLGLPNKQDVRDGIIAYKIAAHAADLAKGHPGAQARDNALSKARFEFRWQDQFNLSLDPEKALEFHDETLPQEGAKQAHFCSMCGPHFCSMKITQDVRDYAREHGLDEAQALAKGMEEKSDEFVRSGAEVYQRT.

The disordered stretch occupies residues 40 to 61 (VPMRKISQSDTPTNTGREKNPP). Residues 45–54 (ISQSDTPTNT) are compositionally biased toward polar residues. Residues Asn229, Met258, Tyr287, His323, 343–345 (SRG), 384–387 (DGLR), and Glu423 contribute to the substrate site. His427 provides a ligand contact to Zn(2+). Tyr450 serves as a coordination point for substrate. His491 contacts Zn(2+). Residues Cys571, Cys574, and Cys579 each coordinate [4Fe-4S] cluster.

It belongs to the ThiC family. As to quaternary structure, homodimer. [4Fe-4S] cluster is required as a cofactor.

It carries out the reaction 5-amino-1-(5-phospho-beta-D-ribosyl)imidazole + S-adenosyl-L-methionine = 4-amino-2-methyl-5-(phosphooxymethyl)pyrimidine + CO + 5'-deoxyadenosine + formate + L-methionine + 3 H(+). It participates in cofactor biosynthesis; thiamine diphosphate biosynthesis. Catalyzes the synthesis of the hydroxymethylpyrimidine phosphate (HMP-P) moiety of thiamine from aminoimidazole ribotide (AIR) in a radical S-adenosyl-L-methionine (SAM)-dependent reaction. The sequence is that of Phosphomethylpyrimidine synthase from Methylococcus capsulatus (strain ATCC 33009 / NCIMB 11132 / Bath).